The chain runs to 405 residues: Bestrophin homolog 14 (405 aa).

Helical transmembrane passes span 28–48, 63–83, 223–243, and 256–276; these read LIGF…LLDE, IGAQ…LIVA, LVYT…CLIG, and EITI…LGWL.

Belongs to the anion channel-forming bestrophin (TC 1.A.46) family. Calcium-sensitive chloride channel subfamily.

It is found in the membrane. This Caenorhabditis elegans protein is Bestrophin homolog 14 (best-14).